A 136-amino-acid polypeptide reads, in one-letter code: Secreted RxLR effector protein 10 (136 aa).

A signal peptide spans 1 to 22 (MRVLNFVLTTTVVLLTSSEGIA). The RxLR-dEER motif lies at 42–56 (RSLRATENPGSDESR). Residues 42–78 (RSLRATENPGSDESRLNEKDTGFDPDGSSSKEDEDIG) are disordered. Over residues 53 to 63 (DESRLNEKDTG) the composition is skewed to basic and acidic residues.

It belongs to the RxLR effector family.

It localises to the secreted. It is found in the host cytoplasm. The protein localises to the host nucleus. In terms of biological role, effector that acts as a broad suppressor of cell death to interrupt plant immunity. Inhibits cell death induced by cell death-inducing proteins, including the PAMP elicitor INF1 from P.infestans. The chain is Secreted RxLR effector protein 10 from Plasmopara viticola (Downy mildew of grapevine).